The primary structure comprises 227 residues: Cytidylate kinase (227 aa).

An ATP-binding site is contributed by 12–20 (GPSGAGKGT).

Belongs to the cytidylate kinase family. Type 1 subfamily.

It is found in the cytoplasm. The catalysed reaction is CMP + ATP = CDP + ADP. It carries out the reaction dCMP + ATP = dCDP + ADP. The protein is Cytidylate kinase of Photorhabdus laumondii subsp. laumondii (strain DSM 15139 / CIP 105565 / TT01) (Photorhabdus luminescens subsp. laumondii).